A 179-amino-acid chain; its full sequence is Large ribosomal subunit protein uL5 (179 aa).

It belongs to the universal ribosomal protein uL5 family. Part of the 50S ribosomal subunit; part of the 5S rRNA/L5/L18/L25 subcomplex. Contacts the 5S rRNA and the P site tRNA. Forms a bridge to the 30S subunit in the 70S ribosome.

Functionally, this is one of the proteins that bind and probably mediate the attachment of the 5S RNA into the large ribosomal subunit, where it forms part of the central protuberance. In the 70S ribosome it contacts protein S13 of the 30S subunit (bridge B1b), connecting the 2 subunits; this bridge is implicated in subunit movement. Contacts the P site tRNA; the 5S rRNA and some of its associated proteins might help stabilize positioning of ribosome-bound tRNAs. This is Large ribosomal subunit protein uL5 from Dichelobacter nodosus (strain VCS1703A).